Consider the following 1032-residue polypeptide: Histone lysine demethylase PHF8 (1032 aa).

Residues 5–56 (PVYCLCRLPYDVTRFMIECDVCQDWFHGSCVGVEEDKAAEIDLYHCPNCQVT) form a PHD-type zinc finger. Residues 65-83 (RRGAVKHADVGLGRDSGRP) are linker. The JmjC domain occupies 199–355 (FSDTRLSNLV…MQLRAYEIEK (157 aa)). Thr248 is a binding site for substrate. Fe cation-binding residues include His251 and Asp253. Lys268 lines the substrate pocket. Fe cation is bound at residue His323. Disordered regions lie at residues 455–515 (SGTP…KGKE), 577–660 (QGKK…VDFD), 697–857 (LDSA…REGA), 875–923 (QQEQ…EPPV), and 943–1015 (EYTA…ATAK). Residues 473–483 (QLNTPLTFSQH) are compositionally biased toward polar residues. Positions 583 to 592 (AGSANGAGSS) are enriched in low complexity. Over residues 620–632 (PRRRPSLPSKKKL) the composition is skewed to basic residues. Positions 644–655 (PCSDPHRIREPG) are enriched in basic and acidic residues. Composition is skewed to low complexity over residues 699 to 710 (SALSEEAPASPS) and 724 to 739 (PPSS…PLSI). Residues 774–784 (PGKRPIKRPAR) are compositionally biased toward basic residues. Basic and acidic residues predominate over residues 848-857 (KQERPVREGA). The span at 882 to 891 (ITKRKYTKKK) shows a compositional bias: basic residues. Positions 970–990 (SRRPSLSPQNSSSYSPSAPSP) are enriched in low complexity.

The protein belongs to the JHDM1 histone demethylase family. JHDM1D subfamily. Requires Fe(2+) as cofactor.

The protein resides in the nucleus. It is found in the nucleolus. It carries out the reaction N(6),N(6)-dimethyl-L-lysyl(36)-[histone H3] + 2 2-oxoglutarate + 2 O2 = L-lysyl(36)-[histone H3] + 2 formaldehyde + 2 succinate + 2 CO2. The catalysed reaction is N(6),N(6)-dimethyl-L-lysyl(9)-[histone H3] + 2 2-oxoglutarate + 2 O2 = L-lysyl(9)-[histone H3] + 2 formaldehyde + 2 succinate + 2 CO2. Functionally, histone lysine demethylase with selectivity for the di- and monomethyl states that plays a key role cell cycle progression, rDNA transcription and brain development. Demethylates mono- and dimethylated histone H3 'Lys-9' residue (H3K9Me1 and H3K9Me2), dimethylated H3 'Lys-27' (H3K27Me2) and monomethylated histone H4 'Lys-20' residue (H4K20Me1). Acts as a transcription activator as H3K9Me1, H3K9Me2, H3K27Me2 and H4K20Me1 are epigenetic repressive marks. Involved in cell cycle progression by being required to control G1-S transition. Acts as a coactivator of rDNA transcription, by activating polymerase I (pol I) mediated transcription of rRNA genes. Has activity toward H4K20Me1 only when nucleosome is used as a substrate and when not histone octamer is used as substrate. Required for brain development, probably by regulating expression of neuron-specific genes. This Danio rerio (Zebrafish) protein is Histone lysine demethylase PHF8 (phf8).